Reading from the N-terminus, the 500-residue chain is NAD(P)H-quinone oxidoreductase chain 4, chloroplastic (500 aa).

Helical transmembrane passes span Phe-4–Leu-24, Tyr-35–Phe-55, Ile-87–Val-107, Phe-113–Ser-130, Leu-134–Met-154, Phe-167–Leu-187, Ile-211–His-231, His-242–Val-262, Ala-272–Ala-292, Ile-305–Asp-325, Gly-330–Gly-350, Leu-386–Thr-406, Ile-416–Met-436, and Leu-462–Val-482.

The protein belongs to the complex I subunit 4 family.

The protein localises to the plastid. It localises to the chloroplast thylakoid membrane. The enzyme catalyses a plastoquinone + NADH + (n+1) H(+)(in) = a plastoquinol + NAD(+) + n H(+)(out). It catalyses the reaction a plastoquinone + NADPH + (n+1) H(+)(in) = a plastoquinol + NADP(+) + n H(+)(out). This is NAD(P)H-quinone oxidoreductase chain 4, chloroplastic (ndhD) from Arabidopsis thaliana (Mouse-ear cress).